We begin with the raw amino-acid sequence, 291 residues long: Methionine aminopeptidase (291 aa).

Residue His118 participates in substrate binding. Positions 135, 146, and 209 each coordinate a divalent metal cation. Residue His216 participates in substrate binding. The a divalent metal cation site is built by Glu241 and Glu273.

Belongs to the peptidase M24A family. Methionine aminopeptidase type 1 subfamily. In terms of assembly, monomer. It depends on Co(2+) as a cofactor. Requires Zn(2+) as cofactor. Mn(2+) is required as a cofactor. Fe(2+) serves as cofactor.

It carries out the reaction Release of N-terminal amino acids, preferentially methionine, from peptides and arylamides.. In terms of biological role, removes the N-terminal methionine from nascent proteins. The N-terminal methionine is often cleaved when the second residue in the primary sequence is small and uncharged (Met-Ala-, Cys, Gly, Pro, Ser, Thr, or Val). Requires deformylation of the N(alpha)-formylated initiator methionine before it can be hydrolyzed. The protein is Methionine aminopeptidase of Chlamydia trachomatis serovar D (strain ATCC VR-885 / DSM 19411 / UW-3/Cx).